Here is a 321-residue protein sequence, read N- to C-terminus: Sphingolipid delta(4)-desaturase DES1 (321 aa).

Transmembrane regions (helical) follow at residues 41 to 61, 68 to 88, 107 to 127, 157 to 177, 187 to 206, and 208 to 230; these read PNFK…LFVV, WLIV…MLAV, ILGF…FKKY, FGKF…PLII, IINT…FLGW, and PLAY…GHFI.

The protein belongs to the fatty acid desaturase type 1 family. DEGS subfamily. In terms of tissue distribution, testes.

It is found in the endoplasmic reticulum membrane. The protein resides in the membrane. The protein localises to the mitochondrion. The catalysed reaction is an N-acylsphinganine + 2 Fe(II)-[cytochrome b5] + O2 + 2 H(+) = an N-acylsphing-4-enine + 2 Fe(III)-[cytochrome b5] + 2 H2O. The enzyme catalyses an N-acyleicosasphinganine + 2 Fe(II)-[cytochrome b5] + O2 + 2 H(+) = an N-acyleicosasphing-4-enine + 2 Fe(III)-[cytochrome b5] + 2 H2O. It functions in the pathway sphingolipid metabolism. In terms of biological role, has sphingolipid-delta-4-desaturase activity. Converts sphinganine-containing sphingolipids (such as N-acylsphinganines or dihydroceramides) into sphingolipids containing the delta-4-desaturated sphingoid base (E)-sphing-4-enine (such as N-acylsphing-4-enines or ceramides), which are required for many different functions (structural functions as well as signaling). Required to initiate spermatid differentiation among other signals. Required for central spindle assembly and cytokinesis during male meiosis, may act as part of an anchoring mechanism that links membrane-bounded cellular compartments to components of the cytoskeleton. This chain is Sphingolipid delta(4)-desaturase DES1, found in Drosophila melanogaster (Fruit fly).